We begin with the raw amino-acid sequence, 262 residues long: Polyamine aminopropyltransferase (262 aa).

One can recognise a PABS domain in the interval 1-249 (MWITQEITPY…DIHRAAFALP (249 aa)). Residue Asn29 participates in S-methyl-5'-thioadenosine binding. Position 83 (Asp83) interacts with spermidine. Asp155 (proton acceptor) is an active-site residue.

The protein belongs to the spermidine/spermine synthase family. Homodimer or homotetramer.

It is found in the cytoplasm. It carries out the reaction S-adenosyl 3-(methylsulfanyl)propylamine + putrescine = S-methyl-5'-thioadenosine + spermidine + H(+). It functions in the pathway amine and polyamine biosynthesis; spermidine biosynthesis; spermidine from putrescine: step 1/1. In terms of biological role, catalyzes the irreversible transfer of a propylamine group from the amino donor S-adenosylmethioninamine (decarboxy-AdoMet) to putrescine (1,4-diaminobutane) to yield spermidine. This Helicobacter pylori (strain P12) protein is Polyamine aminopropyltransferase.